The chain runs to 204 residues: Outer-membrane lipoprotein carrier protein (204 aa).

The first 21 residues, Met-1 to Ala-21, serve as a signal peptide directing secretion.

This sequence belongs to the LolA family. Monomer.

The protein localises to the periplasm. Its function is as follows. Participates in the translocation of lipoproteins from the inner membrane to the outer membrane. Only forms a complex with a lipoprotein if the residue after the N-terminal Cys is not an aspartate (The Asp acts as a targeting signal to indicate that the lipoprotein should stay in the inner membrane). The protein is Outer-membrane lipoprotein carrier protein of Edwardsiella ictaluri (strain 93-146).